We begin with the raw amino-acid sequence, 926 residues long: UvrABC system protein A (926 aa).

31–38 (GPSGSGKS) provides a ligand contact to ATP. The C4-type zinc-finger motif lies at 251–278 (CPEHGFSIPELSARLFSFNSPYGACPSC). ABC transporter domains follow at residues 308 to 568 (SGYF…PSSL) and 588 to 916 (PSGK…KYLR). 620-627 (GVSGSGKS) serves as a coordination point for ATP. A C4-type zinc finger spans residues 719–745 (CEACQGEGVIKVEMHFLPPVYVTCEVC).

This sequence belongs to the ABC transporter superfamily. UvrA family. In terms of assembly, forms a heterotetramer with UvrB during the search for lesions.

The protein localises to the cytoplasm. The UvrABC repair system catalyzes the recognition and processing of DNA lesions. UvrA is an ATPase and a DNA-binding protein. A damage recognition complex composed of 2 UvrA and 2 UvrB subunits scans DNA for abnormalities. When the presence of a lesion has been verified by UvrB, the UvrA molecules dissociate. This is UvrABC system protein A from Aquifex aeolicus (strain VF5).